Reading from the N-terminus, the 86-residue chain is Large ribosomal subunit protein bL27 (86 aa).

Residues 1-20 (MAHKKAGGSSRNGRDSESKR) form a disordered region.

Belongs to the bacterial ribosomal protein bL27 family.

The polypeptide is Large ribosomal subunit protein bL27 (Paraburkholderia phymatum (strain DSM 17167 / CIP 108236 / LMG 21445 / STM815) (Burkholderia phymatum)).